A 776-amino-acid polypeptide reads, in one-letter code: Probable E3 ubiquitin-protein ligase HECTD2 (776 aa).

Positions 1–46 (MSEAVRVPSPATPLVVAAAAPEERKGKESEREKLPPIVSAGAGATA) are disordered. Positions 7 to 20 (VPSPATPLVVAAAA) are enriched in low complexity. At Ser-9 the chain carries Phosphoserine. Basic and acidic residues predominate over residues 21-34 (PEERKGKESEREKL). Residues 437–776 (KRADLKKKLK…ISNSEGFGLE (340 aa)) form the HECT domain. The Glycyl thioester intermediate role is filled by Cys-744.

It carries out the reaction S-ubiquitinyl-[E2 ubiquitin-conjugating enzyme]-L-cysteine + [acceptor protein]-L-lysine = [E2 ubiquitin-conjugating enzyme]-L-cysteine + N(6)-ubiquitinyl-[acceptor protein]-L-lysine.. It functions in the pathway protein modification; protein ubiquitination. E3 ubiquitin-protein ligase which accepts ubiquitin from an E2 ubiquitin-conjugating enzyme in the form of a thioester and then directly transfers the ubiquitin to targeted substrates. The polypeptide is Probable E3 ubiquitin-protein ligase HECTD2 (HECTD2) (Pongo abelii (Sumatran orangutan)).